Consider the following 292-residue polypeptide: Ribosomal protein L11 methyltransferase (292 aa).

Residues T144, G165, D187, and N229 each coordinate S-adenosyl-L-methionine.

This sequence belongs to the methyltransferase superfamily. PrmA family.

The protein localises to the cytoplasm. It carries out the reaction L-lysyl-[protein] + 3 S-adenosyl-L-methionine = N(6),N(6),N(6)-trimethyl-L-lysyl-[protein] + 3 S-adenosyl-L-homocysteine + 3 H(+). Its function is as follows. Methylates ribosomal protein L11. The polypeptide is Ribosomal protein L11 methyltransferase (Saccharophagus degradans (strain 2-40 / ATCC 43961 / DSM 17024)).